A 471-amino-acid polypeptide reads, in one-letter code: tRNA-2-methylthio-N(6)-dimethylallyladenosine synthase (471 aa).

The MTTase N-terminal domain occupies 31–149; that stretch reads LYYHIETYGC…FPQLLWEALN (119 aa). [4Fe-4S] cluster-binding residues include Cys-40, Cys-76, Cys-110, Cys-186, Cys-190, and Cys-193. The region spanning 172–402 is the Radical SAM core domain; sequence RDSNLKAWVN…IELQNKISLE (231 aa). The TRAM domain occupies 405–468; that stretch reads AELRGKIVEV…AWTMQGELVE (64 aa).

It belongs to the methylthiotransferase family. MiaB subfamily. As to quaternary structure, monomer. [4Fe-4S] cluster is required as a cofactor.

The protein resides in the cytoplasm. The enzyme catalyses N(6)-dimethylallyladenosine(37) in tRNA + (sulfur carrier)-SH + AH2 + 2 S-adenosyl-L-methionine = 2-methylsulfanyl-N(6)-dimethylallyladenosine(37) in tRNA + (sulfur carrier)-H + 5'-deoxyadenosine + L-methionine + A + S-adenosyl-L-homocysteine + 2 H(+). In terms of biological role, catalyzes the methylthiolation of N6-(dimethylallyl)adenosine (i(6)A), leading to the formation of 2-methylthio-N6-(dimethylallyl)adenosine (ms(2)i(6)A) at position 37 in tRNAs that read codons beginning with uridine. This chain is tRNA-2-methylthio-N(6)-dimethylallyladenosine synthase, found in Thermoanaerobacter sp. (strain X514).